Consider the following 939-residue polypeptide: Valine--tRNA ligase (939 aa).

Positions 47 to 57 (PNVTGILHMGH) match the 'HIGH' region motif. The 'KMSKS' region signature appears at 563–567 (KLSKS). ATP is bound at residue Lys-566. Residues 874-939 (EHLAKERVRL…QSILDKLASL (66 aa)) adopt a coiled-coil conformation.

It belongs to the class-I aminoacyl-tRNA synthetase family. ValS type 1 subfamily. As to quaternary structure, monomer.

It localises to the cytoplasm. The enzyme catalyses tRNA(Val) + L-valine + ATP = L-valyl-tRNA(Val) + AMP + diphosphate. Catalyzes the attachment of valine to tRNA(Val). As ValRS can inadvertently accommodate and process structurally similar amino acids such as threonine, to avoid such errors, it has a 'posttransfer' editing activity that hydrolyzes mischarged Thr-tRNA(Val) in a tRNA-dependent manner. This is Valine--tRNA ligase from Chlamydia trachomatis serovar L2 (strain ATCC VR-902B / DSM 19102 / 434/Bu).